The following is a 272-amino-acid chain: 3-methyl-2-oxobutanoate hydroxymethyltransferase (272 aa).

2 residues coordinate Mg(2+): aspartate 52 and aspartate 91. 3-methyl-2-oxobutanoate is bound by residues 52 to 53 (DS), aspartate 91, and lysine 121. Position 123 (glutamate 123) interacts with Mg(2+). Glutamate 190 (proton acceptor) is an active-site residue.

The protein belongs to the PanB family. As to quaternary structure, homodecamer; pentamer of dimers. The cofactor is Mg(2+).

It localises to the cytoplasm. It carries out the reaction 3-methyl-2-oxobutanoate + (6R)-5,10-methylene-5,6,7,8-tetrahydrofolate + H2O = 2-dehydropantoate + (6S)-5,6,7,8-tetrahydrofolate. It functions in the pathway cofactor biosynthesis; (R)-pantothenate biosynthesis; (R)-pantoate from 3-methyl-2-oxobutanoate: step 1/2. Functionally, catalyzes the reversible reaction in which hydroxymethyl group from 5,10-methylenetetrahydrofolate is transferred onto alpha-ketoisovalerate to form ketopantoate. The chain is 3-methyl-2-oxobutanoate hydroxymethyltransferase from Flavobacterium johnsoniae (strain ATCC 17061 / DSM 2064 / JCM 8514 / BCRC 14874 / CCUG 350202 / NBRC 14942 / NCIMB 11054 / UW101) (Cytophaga johnsonae).